The sequence spans 639 residues: Serine/threonine-protein phosphatase 2B catalytic subunit A1 (639 aa).

Residues Asp-120, His-122, and Asp-148 each coordinate Fe cation. Residues Asp-148 and Asn-180 each coordinate Zn(2+). The active-site Proton donor is the His-181. Positions 229 and 311 each coordinate Zn(2+). Positions 494 to 503 (KSDIENERLP) are enriched in basic and acidic residues. The segment at 494 to 602 (KSDIENERLP…PSTRRRSLEN (109 aa)) is disordered. Composition is skewed to low complexity over residues 515–527 (ASPS…PATP) and 546–572 (TPIS…GGPP).

Belongs to the PPP phosphatase family. PP-2B subfamily. Composed of two components (A and B), the A component is the catalytic subunit and the B component confers calcium sensitivity. It depends on Fe(3+) as a cofactor. The cofactor is Zn(2+).

It catalyses the reaction O-phospho-L-seryl-[protein] + H2O = L-seryl-[protein] + phosphate. The catalysed reaction is O-phospho-L-threonyl-[protein] + H2O = L-threonyl-[protein] + phosphate. In terms of biological role, calcium-dependent, calmodulin-stimulated protein phosphatase. This subunit may have a role in the calmodulin activation of calcineurin. The protein is Serine/threonine-protein phosphatase 2B catalytic subunit A1 (CNA1) of Cryptococcus neoformans var. grubii serotype A (strain H99 / ATCC 208821 / CBS 10515 / FGSC 9487) (Filobasidiella neoformans var. grubii).